The following is a 1680-amino-acid chain: RAF-like serine/threonine-protein kinase PRAF (1680 aa).

A disordered region spans residues 86–163; that stretch reads FSPSDPHNSV…TPSDDGKDFP (78 aa). One can recognise a PB1 domain in the interval 166–267; that stretch reads RVKFMCSFGG…SRLRVFLFPA (102 aa). Disordered regions lie at residues 363 to 388, 417 to 516, 556 to 580, 594 to 613, 641 to 672, 700 to 725, and 1186 to 1226; these read LTGN…PLLA, PQYT…DSQQ, PDML…QPQQ, GANH…SQQF, QSTS…PQLQ, RSFR…LHRQ, and LPNA…LGGQ. Positions 366-388 are enriched in low complexity; the sequence is NLSNRSNAPSAPSSAPSSPPLLA. Residues 446–482 are compositionally biased toward basic and acidic residues; it reads HEMHYRSTDSRRGPESPPKKFHDALHQDHPITVEQRR. Composition is skewed to low complexity over residues 560–580 and 603–613; these read QSSG…QPQQ and QGDQQQQSQQF. Residues 641 to 651 show a composition bias toward polar residues; that stretch reads QSTSYHGSAPS. A compositionally biased stretch (low complexity) spans 1204–1217; it reads SRSSSSSLSELSKS. Ser-1248 bears the Phosphoserine mark. A compositionally biased stretch (basic and acidic residues) spans 1339 to 1354; sequence ASTVDKENQEEVRTGL. Residues 1339–1372 form a disordered region; it reads ASTVDKENQEEVRTGLDEPADEDKANSTGLGSDP. Ser-1365 carries the post-translational modification Phosphoserine. The region spanning 1389–1655 is the Protein kinase domain; the sequence is LEELRELGSG…SDIAKELRTM (267 aa). Residues 1395-1403 and Lys-1416 each bind ATP; that span reads LGSGTFGTV. Residue Asp-1518 is the Proton acceptor of the active site. Positions 1661 to 1680 are disordered; sequence PKTQAQTQGQSHPHPQMQIV.

The protein belongs to the protein kinase superfamily. Ser/Thr protein kinase family. In terms of processing, hyperphosphorylated in response to auxin. Its phosphorylation state is also rapidly stimulated by photosynthetic activity (e.g. in response to blue light and red light irradiation); dephosphorylated in the darkness.

Its subcellular location is the cytoplasm. It catalyses the reaction L-seryl-[protein] + ATP = O-phospho-L-seryl-[protein] + ADP + H(+). It carries out the reaction L-threonyl-[protein] + ATP = O-phospho-L-threonyl-[protein] + ADP + H(+). With respect to regulation, activated by auxin via rapid phosphorylation. Regulated by photosynthesis-activity-dependent changes in its phosphorylation status. RAF-like protein kinase acting as a central mediator of a fast response pathway to auxin involving proteins phosphorylation, and leading to rapid cellular responses including membrane depolarization and cytoplasmic streaming. Required for general growth and developmental process. Photosynthesis signaling kinase involved in the regulation of the sucrose metabolism involving PGM1. Necessary for optimal chloroplast electron transport rate (ETR). The polypeptide is RAF-like serine/threonine-protein kinase PRAF (Marchantia polymorpha (Common liverwort)).